The primary structure comprises 177 residues: Nucleoside triphosphate/diphosphate phosphatase (177 aa).

The active-site Proton donor is the R23. N87, D103, D105, D107, D120, and E123 together coordinate Mg(2+).

The protein belongs to the Ntdp family. The cofactor is Mg(2+).

The enzyme catalyses a ribonucleoside 5'-triphosphate + H2O = a ribonucleoside 5'-diphosphate + phosphate + H(+). It catalyses the reaction a ribonucleoside 5'-diphosphate + H2O = a ribonucleoside 5'-phosphate + phosphate + H(+). Its function is as follows. Has nucleoside phosphatase activity towards nucleoside triphosphates and nucleoside diphosphates. This chain is Nucleoside triphosphate/diphosphate phosphatase, found in Enterococcus faecalis (strain ATCC 700802 / V583).